Reading from the N-terminus, the 256-residue chain is Triosephosphate isomerase (256 aa).

9 to 11 serves as a coordination point for substrate; that stretch reads NWK. The active-site Electrophile is His-96. The active-site Proton acceptor is the Glu-168. Residues Ser-213 and 234–235 each bind substrate; that span reads GG.

Belongs to the triosephosphate isomerase family. As to quaternary structure, homodimer.

It localises to the cytoplasm. The catalysed reaction is D-glyceraldehyde 3-phosphate = dihydroxyacetone phosphate. The protein operates within carbohydrate biosynthesis; gluconeogenesis. Its pathway is carbohydrate degradation; glycolysis; D-glyceraldehyde 3-phosphate from glycerone phosphate: step 1/1. Involved in the gluconeogenesis. Catalyzes stereospecifically the conversion of dihydroxyacetone phosphate (DHAP) to D-glyceraldehyde-3-phosphate (G3P). This Baumannia cicadellinicola subsp. Homalodisca coagulata protein is Triosephosphate isomerase.